A 477-amino-acid chain; its full sequence is Proline--tRNA ligase (477 aa).

The protein belongs to the class-II aminoacyl-tRNA synthetase family. ProS type 3 subfamily. As to quaternary structure, homodimer.

Its subcellular location is the cytoplasm. The catalysed reaction is tRNA(Pro) + L-proline + ATP = L-prolyl-tRNA(Pro) + AMP + diphosphate. In terms of biological role, catalyzes the attachment of proline to tRNA(Pro) in a two-step reaction: proline is first activated by ATP to form Pro-AMP and then transferred to the acceptor end of tRNA(Pro). The sequence is that of Proline--tRNA ligase from Methanocorpusculum labreanum (strain ATCC 43576 / DSM 4855 / Z).